We begin with the raw amino-acid sequence, 215 residues long: GTP-binding nuclear protein ran-1 (215 aa).

One can recognise a Small GTPase Ran-type domain in the interval 6–170 (GIPTFKLVLV…LWLARKLLGD (165 aa)). 17-24 (DGGTGKTT) contributes to the GTP binding site. Positions 36–44 (KKYVATLGV) are switch-I. GTP contacts are provided by residues G67, 121 to 124 (NKVD), and 149 to 151 (SAK). The segment at 67 to 83 (GQEKFGGLRDGYYIQGQ) is switch-II.

Belongs to the small GTPase superfamily. Ran family. Found in a nuclear export complex with RanGTP, exportin and pre-miRNA.

It is found in the nucleus. Its subcellular location is the chromosome. It localises to the centromere. The protein resides in the kinetochore. Functionally, ran GTPase system comprises ran-1, ran-2 and ran-3 and is essential in nucleocytoplasmic transport. Ran-1 is a GTP-binding protein that mediates the interaction between mitotic chromosomes and kinetochore microtubules. Plays a crucial role in nuclear envelope assembly at the end of each cell division. Required for the import of protein into the nucleus and also for RNA export. RCC1 (ran-3)/Ran (ran-1) complex (together with other proteins) acts as a component of a signal transmission pathway that detects unreplicated DNA. This is GTP-binding nuclear protein ran-1 (ran-1) from Caenorhabditis elegans.